Here is a 71-residue protein sequence, read N- to C-terminus: Conotoxin Tx11.3 (71 aa).

The signal sequence occupies residues 1-19 (MKLCVTFLLVLVILPSVTG). The propeptide occupies 20–47 (VKSSERTLSGAALRGDRGTCSGRGQECK). Intrachain disulfides connect Cys-39/Cys-53, Cys-46/Cys-58, Cys-52/Cys-63, and Cys-57/Cys-70.

Belongs to the I1 superfamily. As to expression, expressed by the venom duct.

The protein localises to the secreted. In Conus textile (Cloth-of-gold cone), this protein is Conotoxin Tx11.3.